Consider the following 874-residue polypeptide: Probable inorganic carbon transporter subunit DabA (874 aa).

Zn(2+) contacts are provided by Cys-398, Asp-400, His-580, and Cys-595.

The protein belongs to the inorganic carbon transporter (TC 9.A.2) DabA family. As to quaternary structure, forms a complex with DabB. Requires Zn(2+) as cofactor.

The protein localises to the cell membrane. In terms of biological role, part of an energy-coupled inorganic carbon pump. In Bacillus anthracis (strain A0248), this protein is Probable inorganic carbon transporter subunit DabA.